We begin with the raw amino-acid sequence, 785 residues long: SUN domain-containing protein 1 (785 aa).

The LMNA-binding stretch occupies residues 1–138; sequence MDFSRLHMYS…TRRPPVLDES (138 aa). The Nuclear segment spans residues 1 to 288; sequence MDFSRLHMYS…VFLLTRCLRN (288 aa). Phosphoserine is present on residues S48, S100, and S138. K195 participates in a covalent cross-link: Glycyl lysine isopeptide (Lys-Gly) (interchain with G-Cter in SUMO2). An SYNE2-binding region spans residues 209–309; it reads SRVYSRDRNQ…FLLLAGLSLR (101 aa). Positions 223 to 309 are EMD-binding; that stretch reads LLQILRRIGA…FLLLAGLSLR (87 aa). The chain crosses the membrane as a helical span at residues 289–308; that stretch reads ICKFLVLLIPLFLLLAGLSL. At 309-785 the chain is on the perinuclear space side; that stretch reads RGQGNFFSFL…RFRVHGEPVK (477 aa). A phosphoserine mark is found at D333 and S344. A coiled-coil region spans residues 428-495; that stretch reads HQEHEVRMSH…KSELSSWRHV (68 aa). Residues 574–785 form a sufficient for interaction with SYNE1 and SYNE2 region; the sequence is TSEAVVSAVS…RFRVHGEPVK (212 aa). The SUN domain maps to 622–784; sequence GGSILSTRCS…YRFRVHGEPV (163 aa).

In terms of assembly, core component of the LINC complex which is composed of inner nuclear membrane SUN domain-containing proteins coupled to outer nuclear membrane KASH domain-containing nesprins. SUN and KASH domain-containing proteins seem to bind each other promiscuously; however, differentially expression of LINC complex constituents is giving rise to specific assemblies. At least SUN1/2-containing core LINC complexes are proposed to be hexameric composed of three protomers of each KASH and SUN domain-containing protein. Interacts with KASH5 (via the last 22 amino acids); this interaction mediates KASH5 telomere localization by forming a SUN1:KASH5 LINC complex. May interact with SYNE3. Interacts with SYNE2 and SYNE1; probably forming respective LINC complexes. Interacts with A-type lamin with a strong preference for unprocessed A-type lamin compared with the mature protein. Interaction with lamins B1 and C is hardly detectable. Interacts with NAT10. Interacts with EMD and TSNAX. Associates with the nuclear pore complex (NPC). Interacts with CCDC79/TERB1; promoting the accumulation of the LINC complex complexes at the telomere-nuclear envelope attachment sites. Interacts (via KASH domain) with TMEM258. In terms of processing, the disulfide bond with KASH domain-containing nesprins is required for stability of the respective LINC complexes under tensile forces.

It is found in the nucleus inner membrane. Its function is as follows. As a component of the LINC (LInker of Nucleoskeleton and Cytoskeleton) complex involved in the connection between the nuclear lamina and the cytoskeleton. The nucleocytoplasmic interactions established by the LINC complex play an important role in the transmission of mechanical forces across the nuclear envelope and in nuclear movement and positioning. Required for interkinetic nuclear migration (INM) and essential for nucleokinesis and centrosome-nucleus coupling during radial neuronal migration in the cerebral cortex and during glial migration. Involved in telomere attachment to nuclear envelope in the prophase of meiosis implicating a SUN1/2:KASH5 LINC complex in which SUN1 and SUN2 seem to act at least partial redundantly. Required for gametogenesis and involved in selective gene expression of coding and non-coding RNAs needed for gametogenesis. Helps to define the distribution of nuclear pore complexes (NPCs). Required for efficient localization of SYNE4 in the nuclear envelope. May be involved in nuclear remodeling during sperm head formation in spermatogenesis. May play a role in DNA repair by suppressing non-homologous end joining repair to facilitate the repair of DNA cross-links. This chain is SUN domain-containing protein 1, found in Homo sapiens (Human).